Consider the following 255-residue polypeptide: MFIGIVSLFPEMFRAITDYGVTGRAVKKGLLNIQSWSPRDFTHDRHRTVDDRPYGGGPGMLMMVQPLRDAIHAAKAAAGEGAKVIYLSPQGRKLDQAGVSELATNQKLILVCGRYEGVDERVIQTEIDEEWSIGDYVLSGGELPAMTLIDSVARFIPGVLGHEASAIEDSFADGLLDCPHYTRPEVLEGMEVPPVLLSGNHAEIRRWRLKQSLGRTWLRRPELLENLALTEEQARLLAEFKTEHAQQQHKHDGMA.

Residues Gly113 and 133–138 each bind S-adenosyl-L-methionine; that span reads IGDYVL.

Belongs to the RNA methyltransferase TrmD family. In terms of assembly, homodimer.

Its subcellular location is the cytoplasm. The catalysed reaction is guanosine(37) in tRNA + S-adenosyl-L-methionine = N(1)-methylguanosine(37) in tRNA + S-adenosyl-L-homocysteine + H(+). In terms of biological role, specifically methylates guanosine-37 in various tRNAs. This Salmonella schwarzengrund (strain CVM19633) protein is tRNA (guanine-N(1)-)-methyltransferase.